A 422-amino-acid polypeptide reads, in one-letter code: Transcription termination factor Rho 1 (422 aa).

In terms of domain architecture, Rho RNA-BD spans 49–124; that stretch reads AAIGGGVVEI…VKAHSINFTD (76 aa). ATP is bound by residues 173–178, 185–190, and Arg216; these read GKGQRA and RAGKTI.

The protein belongs to the Rho family. Homohexamer. The homohexamer assembles into an open ring structure.

Functionally, facilitates transcription termination by a mechanism that involves Rho binding to the nascent RNA, activation of Rho's RNA-dependent ATPase activity, and release of the mRNA from the DNA template. The polypeptide is Transcription termination factor Rho 1 (Ehrlichia chaffeensis (strain ATCC CRL-10679 / Arkansas)).